The following is a 158-amino-acid chain: NAD(P)H-quinone oxidoreductase subunit N (158 aa).

The protein belongs to the complex I NdhN subunit family. As to quaternary structure, NDH-1 can be composed of about 15 different subunits; different subcomplexes with different compositions have been identified which probably have different functions.

The protein resides in the cellular thylakoid membrane. The catalysed reaction is a plastoquinone + NADH + (n+1) H(+)(in) = a plastoquinol + NAD(+) + n H(+)(out). The enzyme catalyses a plastoquinone + NADPH + (n+1) H(+)(in) = a plastoquinol + NADP(+) + n H(+)(out). Its function is as follows. NDH-1 shuttles electrons from an unknown electron donor, via FMN and iron-sulfur (Fe-S) centers, to quinones in the respiratory and/or the photosynthetic chain. The immediate electron acceptor for the enzyme in this species is believed to be plastoquinone. Couples the redox reaction to proton translocation, and thus conserves the redox energy in a proton gradient. Cyanobacterial NDH-1 also plays a role in inorganic carbon-concentration. This is NAD(P)H-quinone oxidoreductase subunit N from Gloeothece citriformis (strain PCC 7424) (Cyanothece sp. (strain PCC 7424)).